Consider the following 735-residue polypeptide: Photosystem I P700 chlorophyll a apoprotein A2 (735 aa).

Helical transmembrane passes span 46–69 (IFAS…FYVS), 135–158 (LSTA…IHGY), 176–200 (LNHH…HVAI), 274–292 (IAHH…GHMY), 329–352 (LNLQ…QHMY), 368–394 (AALY…IFLV), 416–438 (VIIS…LYVH), and 521–539 (FLVH…LILV). [4Fe-4S] cluster contacts are provided by cysteine 563 and cysteine 572. 2 consecutive transmembrane segments (helical) span residues 579 to 600 (AFYL…YWHW) and 647 to 669 (LSVW…MFLI). Chlorophyll a-binding residues include histidine 658, methionine 666, and tyrosine 674. Phylloquinone is bound at residue tryptophan 675. A helical membrane pass occupies residues 708-728 (FVGLIHFTVGYILTYAAFLIA).

It belongs to the PsaA/PsaB family. The PsaA/B heterodimer binds the P700 chlorophyll special pair and subsequent electron acceptors. PSI consists of a core antenna complex that captures photons, and an electron transfer chain that converts photonic excitation into a charge separation. The eukaryotic PSI reaction center is composed of at least 11 subunits. It depends on P700 is a chlorophyll a/chlorophyll a' dimer, A0 is one or more chlorophyll a, A1 is one or both phylloquinones and FX is a shared 4Fe-4S iron-sulfur center. as a cofactor.

It is found in the plastid. It localises to the chloroplast thylakoid membrane. The catalysed reaction is reduced [plastocyanin] + hnu + oxidized [2Fe-2S]-[ferredoxin] = oxidized [plastocyanin] + reduced [2Fe-2S]-[ferredoxin]. Its function is as follows. PsaA and PsaB bind P700, the primary electron donor of photosystem I (PSI), as well as the electron acceptors A0, A1 and FX. PSI is a plastocyanin/cytochrome c6-ferredoxin oxidoreductase, converting photonic excitation into a charge separation, which transfers an electron from the donor P700 chlorophyll pair to the spectroscopically characterized acceptors A0, A1, FX, FA and FB in turn. Oxidized P700 is reduced on the lumenal side of the thylakoid membrane by plastocyanin or cytochrome c6. The sequence is that of Photosystem I P700 chlorophyll a apoprotein A2 from Bigelowiella natans (Pedinomonas minutissima).